A 1514-amino-acid polypeptide reads, in one-letter code: Polycomb group protein ASXL1 (1514 aa).

The HTH HARE-type domain maps to 11-86 (RTWAEAARLV…RISLFTLKKD (76 aa)). 2 disordered regions span residues 95 to 170 (ATVD…VMLP) and 183 to 249 (HVEP…RGEE). Residues 98–107 (DGDEPEDSAD) are compositionally biased toward acidic residues. Polar residues predominate over residues 111-145 (CGSNEASTVSGENDVSLDETSSNASCSTESQSRPL). Residues 199 to 209 (SGSPSSSSSGS) are compositionally biased toward low complexity. Residues 243–246 (KRNR) are interaction with nucleosomal DNA forming a DNA clamp with BAP1. The 110-residue stretch at 255–364 (PGSILVNTNL…FEDYYGQKLG (110 aa)) folds into the DEUBAD domain. The LXXLL motif 1 motif lies at 284–288 (LLLLL). The tract at residues 300 to 655 (LLRLSGSALN…GGGSGAIDEG (356 aa)) is interaction with NCOA1. The short motif at 310 to 315 (NEFFTH) is the NEF motif element. Residues 336 to 346 (RLRQEMEKEKK) form an interaction with nucleosomal DNA region. 5 disordered regions span residues 378–543 (EEAK…EDRQ), 635–823 (TTAI…FDNM), 895–914 (SDPE…EKEW), 926–952 (SVPQ…SDSE), and 964–995 (ISEA…VDAS). The short motif at 408–415 (FKKRSRPD) is the Nuclear localization signal element. The span at 458–473 (VNSTPGPDVSSATSGQ) shows a compositional bias: polar residues. A phosphoserine mark is found at Ser-498 and Ser-500. Composition is skewed to basic and acidic residues over residues 514–525 (QETKDQKRKSFE) and 533–543 (PEKKPRLEDRQ). Residues 638–654 (IGGGGGPGGGGSGAIDE) show a composition bias toward gly residues. Over residues 678–692 (PSTSGESASDLQRTQ) the composition is skewed to polar residues. 2 stretches are compositionally biased toward basic and acidic residues: residues 713–728 (ARRE…ESCL) and 779–793 (LLDD…REDQ). Residues 808 to 812 (LGDLL) carry the LXXLL motif 2 motif. Polar residues predominate over residues 971–980 (HSESTDTASD). The tract at residues 1082–1087 (LVMHLL) is required for interaction with RARA. 3 disordered regions span residues 1095–1131 (KVLP…ENNR), 1213–1234 (EQKE…GQCL), and 1256–1338 (SEQT…VSAD). The segment covering 1119–1129 (DRGTLQGTGEN) has biased composition (polar residues). 2 stretches are compositionally biased toward polar residues: residues 1256-1269 (SEQT…QNNA) and 1313-1324 (SKNSVSGGVQTT). A PHD-type; atypical zinc finger spans residues 1476–1513 (SLQCACSLKAMIMCQGCGAFCHDDCIGPSKLCVLCLVV).

It belongs to the Asx family. As to quaternary structure, core component of the polycomb repressive deubiquitinase (PR-DUB) complex, at least composed of BAP1, one of ASXL1, ASXL2 or (probably) ASXL3, and one of MBD5 or MBD6. Distinct combinations of ASXL and MBD proteins may preferentially bind specific histone modification marks. The PR-DUB core associates with a number of accessory proteins, including FOXK1, FOXK2, KDM1B, HCFC1 and OGT; KDM1B specifically associates with ASXL2 PR-DUB complexes. Interacts (via DEUBAD domain) with BAP1 (via ULD domain); the interaction is direct and forms a ubiquitin binding cleft. The interaction with BAP1 is important for maintaining BAP1 stability. Together with BAP1, associates (via DEUBAD domain) with nucleosomes; interacts with nucleosomal DNA and stabilizes the orientation of the nucleosome to line up the PR-DUB complex active site with its H2AK118ub1 substrate. Interacts (via PHD domain) with MBD5 and MBD6 (via MBD domain); the interaction is probably direct and mediates association of MBD proteins with the PR-DUB core. Interacts with RARA, RXRA. Interacts with NCOA1. Interacts with PPARA and PPARG. Post-translationally, ubiquitinated by TRIP12, leading to its subsequent degradation following binding of N(6)-methyladenine methylated DNA (6mA).

The protein localises to the nucleus. Functionally, probable Polycomb group (PcG) protein involved in transcriptional regulation mediated by ligand-bound nuclear hormone receptors, such as retinoic acid receptors (RARs) and peroxisome proliferator-activated receptor gamma (PPARG). Acts as a coactivator of RARA and RXRA through association with NCOA1. Acts as a corepressor for PPARG and suppresses its adipocyte differentiation-inducing activity. Non-catalytic component of the PR-DUB complex, a complex that specifically mediates deubiquitination of histone H2A monoubiquitinated at 'Lys-119' (H2AK119ub1). Acts as a sensor of N(6)-methyladenine methylation on DNA (6mA): recognizes and binds 6mA DNA, leading to its ubiquitination and degradation by TRIP12, thereby inactivating the PR-DUB complex and regulating Polycomb silencing. The PR-DUB complex is an epigenetic regulator of gene expression and acts as a transcriptional coactivator, affecting genes involved in development, cell communication, signaling, cell proliferation and cell viability. ASXL1, ASXL2 and ASXL3 function redundantly in the PR-DUB complex. The ASXL proteins are essential for chromatin recruitment and transcriptional activation of associated genes. ASXL1 and ASXL2 are important for BAP1 protein stability. Together with BAP1, negatively regulates epithelial-mesenchymal transition (EMT) of trophoblast stem cells during placental development by regulating genes involved in epithelial cell integrity, cell adhesion and cytoskeletal organization. This chain is Polycomb group protein ASXL1 (Asxl1), found in Mus musculus (Mouse).